The sequence spans 282 residues: Shikimate dehydrogenase (NADP(+)) (282 aa).

Shikimate-binding positions include 15 to 17 (SKS) and Thr62. The Proton acceptor role is filled by Lys66. Asn87 and Asp103 together coordinate shikimate. NADP(+) is bound by residues 127–131 (GAGGA), 151–156 (NRTHTK), and Met220. Tyr222 is a binding site for shikimate. Residue Gly244 coordinates NADP(+).

Belongs to the shikimate dehydrogenase family. Homodimer.

It carries out the reaction shikimate + NADP(+) = 3-dehydroshikimate + NADPH + H(+). It functions in the pathway metabolic intermediate biosynthesis; chorismate biosynthesis; chorismate from D-erythrose 4-phosphate and phosphoenolpyruvate: step 4/7. In terms of biological role, involved in the biosynthesis of the chorismate, which leads to the biosynthesis of aromatic amino acids. Catalyzes the reversible NADPH linked reduction of 3-dehydroshikimate (DHSA) to yield shikimate (SA). This Shewanella baltica (strain OS155 / ATCC BAA-1091) protein is Shikimate dehydrogenase (NADP(+)).